Here is a 151-residue protein sequence, read N- to C-terminus: Spore coat polysaccharide biosynthesis protein SpsL (151 aa).

It to dTDP-4-dehydrorhamnose reductase.

It participates in spore coat biogenesis; spore coat polysaccharide biosynthesis. In Bacillus subtilis (strain 168), this protein is Spore coat polysaccharide biosynthesis protein SpsL (spsL).